The chain runs to 365 residues: Parathion hydrolase (365 aa).

A signal peptide (tat-type signal) is located at residues 1–29 (MQTRRVVLKSAAAAGTLLGGLAGCASVAG). Positions 55, 57, 169, 201, 230, and 301 each coordinate Zn(2+). K169 bears the N6-carboxylysine mark.

This sequence belongs to the metallo-dependent hydrolases superfamily. Phosphotriesterase family. As to quaternary structure, homodimer. The cofactor is Zn(2+). Post-translationally, predicted to be exported by the Tat system. The position of the signal peptide cleavage has been experimentally proven.

It is found in the cell membrane. The enzyme catalyses An aryl dialkyl phosphate + H2O = dialkyl phosphate + an aryl alcohol.. In terms of biological role, has an unusual substrate specificity for synthetic organophosphate triesters and phosphorofluoridates. All of the phosphate triesters found to be substrates are synthetic compounds. The identity of any naturally occurring substrate for the enzyme is unknown. Has no detectable activity with phosphate monoesters or diesters and no activity as an esterase or protease. It catalyzes the hydrolysis of the insecticide paraoxon at a rate approaching the diffusion limit and thus appears to be optimally evolved for utilizing this synthetic substrate. This Brevundimonas diminuta (Pseudomonas diminuta) protein is Parathion hydrolase (opd).